The sequence spans 178 residues: Caveolin-1 (178 aa).

Ser-2 is subject to N-acetylserine. Position 2 is a phosphoserine (Ser-2). Residues 2–94 form a required for homooligomerization region; sequence SGGKYVDSEG…WKASFTTFTV (93 aa). The Cytoplasmic segment spans residues 2 to 104; sequence SGGKYVDSEG…TKYWFYRLLS (103 aa). N6-acetyllysine; alternate is present on Lys-5. Lys-5 participates in a covalent cross-link: Glycyl lysine isopeptide (Lys-Gly) (interchain with G-Cter in ubiquitin); alternate. A Phosphotyrosine modification is found at Tyr-6. Ser-9 carries the phosphoserine modification. Tyr-14 carries the phosphotyrosine; by ABL1 modification. Tyr-25 is subject to Phosphotyrosine. Residues Lys-26 and Lys-30 each participate in a glycyl lysine isopeptide (Lys-Gly) (interchain with G-Cter in ubiquitin) cross-link. Ser-37 carries the post-translational modification Phosphoserine. Residues Lys-39, Lys-47, and Lys-57 each participate in a glycyl lysine isopeptide (Lys-Gly) (interchain with G-Cter in ubiquitin) cross-link. The segment at 82–94 is interaction with CAVIN3; the sequence is DGIWKASFTTFTV. An intramembrane region (helical) is located at residues 105–125; sequence ALFGIPMALIWGIYFAILSFL. The Cytoplasmic segment spans residues 126-178; that stretch reads HIWAVVPCIKSFLIEIQCISRVYSIYIHTVCDPLFEAIGKIFSNVRIGLQKEI. Residues 131-142 form an interacts with SPRY1, SPRY2, SPRY3 and SPRY4 region; the sequence is VPCIKSFLIEIQ. S-palmitoyl cysteine attachment occurs at residues Cys-133, Cys-143, and Cys-156. An interacts with SPRY1, SPRY2, and SPRY4 region spans residues 149 to 160; the sequence is SIYIHTVCDPLF. The interacts with SPRY1, SPRY2, SPRY3 and SPRY4 stretch occupies residues 167-178; that stretch reads FSNVRIGLQKEI.

This sequence belongs to the caveolin family. In terms of assembly, homooligomer. Interacts with GLIPR2. Interacts with NOSTRIN. Interacts with SNAP25 and STX1A. Interacts (via the N-terminus) with DPP4; the interaction is direct. Interacts with CTNNB1, CDH1 and JUP. Interacts with PACSIN2; this interaction induces membrane tubulation. Interacts with SLC7A9. Interacts with BMX and BTK. Interacts with TGFBR1. Interacts with CAVIN3 (via leucine-zipper domain) in a cholesterol-sensitive manner. Interacts with CAVIN1. Interacts with EHD2 in a cholesterol-dependent manner. Forms a ternary complex with UBXN6 and VCP; mediates CAV1 targeting to lysosomes for degradation. Interacts with ABCG1; this interaction regulates ABCG1-mediated cholesterol efflux. Interacts with NEU3; this interaction enhances NEU3 sialidase activity within caveola. Interacts (via C-terminus) with SPRY1, SPRY2 (via C-terminus), SPRY3, and SPRY4. Interacts with IGFBP5; this interaction allows trafficking of IGFBP5 from the plasma membrane to the nucleus. Post-translationally, phosphorylated at Tyr-14 by ABL1 in response to oxidative stress. Ubiquitinated. Undergo monoubiquitination and multi- and/or polyubiquitination. Monoubiquitination of N-terminal lysines promotes integration in a ternary complex with UBXN6 and VCP which promotes oligomeric CAV1 targeting to lysosomes for degradation. Ubiquitinated by ZNRF1; leading to degradation and modulation of the TLR4-mediated immune response.

Its subcellular location is the golgi apparatus membrane. It is found in the cell membrane. The protein resides in the membrane. The protein localises to the caveola. It localises to the membrane raft. Functionally, may act as a scaffolding protein within caveolar membranes. Forms a stable heterooligomeric complex with CAV2 that targets to lipid rafts and drives caveolae formation. Mediates the recruitment of CAVIN proteins (CAVIN1/2/3/4) to the caveolae. Interacts directly with G-protein alpha subunits and can functionally regulate their activity. Involved in the costimulatory signal essential for T-cell receptor (TCR)-mediated T-cell activation. Its binding to DPP4 induces T-cell proliferation and NF-kappa-B activation in a T-cell receptor/CD3-dependent manner. Recruits CTNNB1 to caveolar membranes and may regulate CTNNB1-mediated signaling through the Wnt pathway. Negatively regulates TGFB1-mediated activation of SMAD2/3 by mediating the internalization of TGFBR1 from membrane rafts leading to its subsequent degradation. Binds 20(S)-hydroxycholesterol (20(S)-OHC). The polypeptide is Caveolin-1 (CAV1) (Saimiri boliviensis boliviensis (Bolivian squirrel monkey)).